A 178-amino-acid chain; its full sequence is MARLYETYKKDIVPKMMEKFQYDNIMQVPKVERVVVNIGVGEAIQNPKALDGAVNDLSIISGQKPVITRARKSIAGFKLREGMAIGCKVTLRGERMYDFLDRLINLALPRVRDFRGVSPQAFDGRGNYSLGIKEQTIFPEIDYDKIDKIRGLEVVVVTTAKTDEEARELLKSMGMPFR.

This sequence belongs to the universal ribosomal protein uL5 family. As to quaternary structure, part of the 50S ribosomal subunit; part of the 5S rRNA/L5/L18/L25 subcomplex. Contacts the 5S rRNA and the P site tRNA. Forms a bridge to the 30S subunit in the 70S ribosome.

This is one of the proteins that bind and probably mediate the attachment of the 5S RNA into the large ribosomal subunit, where it forms part of the central protuberance. In the 70S ribosome it contacts protein S13 of the 30S subunit (bridge B1b), connecting the 2 subunits; this bridge is implicated in subunit movement. Contacts the P site tRNA; the 5S rRNA and some of its associated proteins might help stabilize positioning of ribosome-bound tRNAs. The protein is Large ribosomal subunit protein uL5 of Syntrophomonas wolfei subsp. wolfei (strain DSM 2245B / Goettingen).